The chain runs to 337 residues: Holliday junction branch migration complex subunit RuvB (337 aa).

The interval 4–184 is large ATPase domain (RuvB-L); that stretch reads ADRLIAPAAI…FGIVQRLEFY (181 aa). Residues Ile-23, Arg-24, Gly-65, Lys-68, Thr-69, Thr-70, 131–133, Arg-174, Tyr-184, and Arg-221 contribute to the ATP site; that span reads EDY. Residue Thr-69 coordinates Mg(2+). The small ATPAse domain (RuvB-S) stretch occupies residues 185–255; that stretch reads KVEDLAHIVG…IAAQALDMLD (71 aa). Residues 258 to 337 are head domain (RuvB-H); that stretch reads NAGFDYMDRK…FGLTTPERQG (80 aa). The DNA site is built by Arg-313 and Arg-318.

This sequence belongs to the RuvB family. Homohexamer. Forms an RuvA(8)-RuvB(12)-Holliday junction (HJ) complex. HJ DNA is sandwiched between 2 RuvA tetramers; dsDNA enters through RuvA and exits via RuvB. An RuvB hexamer assembles on each DNA strand where it exits the tetramer. Each RuvB hexamer is contacted by two RuvA subunits (via domain III) on 2 adjacent RuvB subunits; this complex drives branch migration. In the full resolvosome a probable DNA-RuvA(4)-RuvB(12)-RuvC(2) complex forms which resolves the HJ.

It localises to the cytoplasm. The enzyme catalyses ATP + H2O = ADP + phosphate + H(+). Functionally, the RuvA-RuvB-RuvC complex processes Holliday junction (HJ) DNA during genetic recombination and DNA repair, while the RuvA-RuvB complex plays an important role in the rescue of blocked DNA replication forks via replication fork reversal (RFR). RuvA specifically binds to HJ cruciform DNA, conferring on it an open structure. The RuvB hexamer acts as an ATP-dependent pump, pulling dsDNA into and through the RuvAB complex. RuvB forms 2 homohexamers on either side of HJ DNA bound by 1 or 2 RuvA tetramers; 4 subunits per hexamer contact DNA at a time. Coordinated motions by a converter formed by DNA-disengaged RuvB subunits stimulates ATP hydrolysis and nucleotide exchange. Immobilization of the converter enables RuvB to convert the ATP-contained energy into a lever motion, pulling 2 nucleotides of DNA out of the RuvA tetramer per ATP hydrolyzed, thus driving DNA branch migration. The RuvB motors rotate together with the DNA substrate, which together with the progressing nucleotide cycle form the mechanistic basis for DNA recombination by continuous HJ branch migration. Branch migration allows RuvC to scan DNA until it finds its consensus sequence, where it cleaves and resolves cruciform DNA. This chain is Holliday junction branch migration complex subunit RuvB, found in Tolumonas auensis (strain DSM 9187 / NBRC 110442 / TA 4).